The sequence spans 255 residues: Small ribosomal subunit protein uS10m (255 aa).

A mitochondrion-targeting transit peptide spans 1 to 32; it reads MALPAARSALSARAFIRPAAALNAAASSSRYL. 2 disordered regions span residues 30 to 52 and 220 to 255; these read RYLS…NSET and SEGE…AKSS. A compositionally biased stretch (basic and acidic residues) spans 236 to 255; sequence DAAREEKPAEKLKEEEAKSS.

This sequence belongs to the universal ribosomal protein uS10 family. In terms of assembly, part of the mitochondrial small ribosomal subunit.

The protein resides in the mitochondrion. Its function is as follows. Involved in mitochondrial genome encoded proteins translation. Involved in the binding of tRNA to the ribosomes. The sequence is that of Small ribosomal subunit protein uS10m (RSM10) from Cryptococcus neoformans var. neoformans serotype D (strain B-3501A) (Filobasidiella neoformans).